We begin with the raw amino-acid sequence, 738 residues long: NAD(P)H-quinone oxidoreductase subunit 5, chloroplastic (738 aa).

17 helical membrane passes run Trp9–Phe29, Ile39–Ser59, Ile89–Ile109, Phe125–Ile145, Ile147–Thr167, Gly185–Phe205, Phe224–Phe244, Thr258–Ala278, Leu280–Ile300, Leu327–Ile347, Thr396–Ser416, Trp425–Tyr445, Met544–Leu564, Phe600–Phe620, Ile667–Phe687, Gly694–Gly714, and Ile718–Asn738.

Belongs to the complex I subunit 5 family. In terms of assembly, NDH is composed of at least 16 different subunits, 5 of which are encoded in the nucleus.

It localises to the plastid. It is found in the chloroplast thylakoid membrane. The enzyme catalyses a plastoquinone + NADH + (n+1) H(+)(in) = a plastoquinol + NAD(+) + n H(+)(out). It carries out the reaction a plastoquinone + NADPH + (n+1) H(+)(in) = a plastoquinol + NADP(+) + n H(+)(out). Functionally, NDH shuttles electrons from NAD(P)H:plastoquinone, via FMN and iron-sulfur (Fe-S) centers, to quinones in the photosynthetic chain and possibly in a chloroplast respiratory chain. The immediate electron acceptor for the enzyme in this species is believed to be plastoquinone. Couples the redox reaction to proton translocation, and thus conserves the redox energy in a proton gradient. The sequence is that of NAD(P)H-quinone oxidoreductase subunit 5, chloroplastic (ndhF) from Ranunculus macranthus (Large buttercup).